The primary structure comprises 552 residues: Probable glucomannan 4-beta-mannosyltransferase 10 (552 aa).

Residues 62-82 (IVPLFKCLVAFCLIISLLVFI) form a helical membrane-spanning segment. Residue D161 is part of the active site. The substrate site is built by D220 and D222. The active site involves D314. The next 4 membrane-spanning stretches (helical) occupy residues 393-413 (IIVHCFTFIFYCVILPTSVFF), 430-450 (ITLCIVIATPRSFYLVIFWIL), 509-529 (EIMVGIYILCCACYGLFFGNT), and 530-550 (LLYLYLFMQAVAFLISGVGFV).

The protein belongs to the glycosyltransferase 2 family. Plant cellulose synthase-like A subfamily.

Its subcellular location is the golgi apparatus membrane. It catalyses the reaction GDP-mannose + (glucomannan)n = GDP + (glucomannan)n+1.. In terms of biological role, probable mannan synthase which consists of a 4-beta-mannosyltransferase activity on mannan using GDP-mannose. The beta-1,4-mannan product is the backbone for galactomannan synthesis by galactomannan galactosyltransferase. Galactomannan is a noncellulosic polysaccharides of plant cell wall. The chain is Probable glucomannan 4-beta-mannosyltransferase 10 from Arabidopsis thaliana (Mouse-ear cress).